A 205-amino-acid chain; its full sequence is Imidazole glycerol phosphate synthase subunit HisH (205 aa).

The Glutamine amidotransferase type-1 domain occupies 6 to 205; sequence RVGIIDHGSG…LLTRWLNQLS (200 aa). The Nucleophile role is filled by cysteine 84. Residues histidine 185 and glutamate 187 contribute to the active site.

As to quaternary structure, heterodimer of HisH and HisF.

The protein localises to the cytoplasm. It carries out the reaction 5-[(5-phospho-1-deoxy-D-ribulos-1-ylimino)methylamino]-1-(5-phospho-beta-D-ribosyl)imidazole-4-carboxamide + L-glutamine = D-erythro-1-(imidazol-4-yl)glycerol 3-phosphate + 5-amino-1-(5-phospho-beta-D-ribosyl)imidazole-4-carboxamide + L-glutamate + H(+). The enzyme catalyses L-glutamine + H2O = L-glutamate + NH4(+). It participates in amino-acid biosynthesis; L-histidine biosynthesis; L-histidine from 5-phospho-alpha-D-ribose 1-diphosphate: step 5/9. Functionally, IGPS catalyzes the conversion of PRFAR and glutamine to IGP, AICAR and glutamate. The HisH subunit catalyzes the hydrolysis of glutamine to glutamate and ammonia as part of the synthesis of IGP and AICAR. The resulting ammonia molecule is channeled to the active site of HisF. The sequence is that of Imidazole glycerol phosphate synthase subunit HisH from Cutibacterium acnes (strain DSM 16379 / KPA171202) (Propionibacterium acnes).